Reading from the N-terminus, the 387-residue chain is S-adenosylmethionine synthase (387 aa).

His-16 is a binding site for ATP. Asp-18 serves as a coordination point for Mg(2+). Glu-44 is a K(+) binding site. 2 residues coordinate L-methionine: Glu-57 and Gln-100. A flexible loop region spans residues 100–110; sequence QSPDIAQGVDE. ATP contacts are provided by residues 167-169, 232-233, Asp-241, 247-248, Ala-264, and Lys-268; these read DAK, RF, and RK. An L-methionine-binding site is contributed by Asp-241. L-methionine is bound at residue Lys-272.

The protein belongs to the AdoMet synthase family. In terms of assembly, homotetramer; dimer of dimers. It depends on Mg(2+) as a cofactor. K(+) is required as a cofactor.

The protein resides in the cytoplasm. It catalyses the reaction L-methionine + ATP + H2O = S-adenosyl-L-methionine + phosphate + diphosphate. It participates in amino-acid biosynthesis; S-adenosyl-L-methionine biosynthesis; S-adenosyl-L-methionine from L-methionine: step 1/1. Its function is as follows. Catalyzes the formation of S-adenosylmethionine (AdoMet) from methionine and ATP. The overall synthetic reaction is composed of two sequential steps, AdoMet formation and the subsequent tripolyphosphate hydrolysis which occurs prior to release of AdoMet from the enzyme. In Janthinobacterium sp. (strain Marseille) (Minibacterium massiliensis), this protein is S-adenosylmethionine synthase.